A 274-amino-acid chain; its full sequence is 1D-myo-inositol 2-acetamido-2-deoxy-alpha-D-glucopyranoside deacetylase 2 (274 aa).

Residues His-6, Asp-9, and His-140 each contribute to the Zn(2+) site.

This sequence belongs to the MshB deacetylase family. Zn(2+) serves as cofactor.

It carries out the reaction 1D-myo-inositol 2-acetamido-2-deoxy-alpha-D-glucopyranoside + H2O = 1D-myo-inositol 2-amino-2-deoxy-alpha-D-glucopyranoside + acetate. Functionally, catalyzes the deacetylation of 1D-myo-inositol 2-acetamido-2-deoxy-alpha-D-glucopyranoside (GlcNAc-Ins) in the mycothiol biosynthesis pathway. This Saccharopolyspora erythraea (strain ATCC 11635 / DSM 40517 / JCM 4748 / NBRC 13426 / NCIMB 8594 / NRRL 2338) protein is 1D-myo-inositol 2-acetamido-2-deoxy-alpha-D-glucopyranoside deacetylase 2.